A 229-amino-acid chain; its full sequence is MGEPQQVSALPIPPMQYIKEYTDENIRKGLAPKPPLPIKDSYMMFGNQFQCDDLIIRPLETQGIERLHPMQFDHKKELRKLLMSILVNFLDMLDILIRSPGSIRREEKLEDLKLLFVHMHHLINEYRPHQARETLRVMMEVQKRQRLETAERFQKHLERVVEMIQNCLASLPNDLPLSDGAVSVKTEPMDVREPCTDHHAGPQEAAAASLKETTIDKDAAMCVIIDEMT.

Belongs to the Mediator complex subunit 7 family. Component of the Mediator complex.

It is found in the nucleus. In terms of biological role, component of the Mediator complex, a coactivator involved in the regulated transcription of nearly all RNA polymerase II-dependent genes. Mediator functions as a bridge to convey information from gene-specific regulatory proteins to the basal RNA polymerase II transcription machinery. Mediator is recruited to promoters by direct interactions with regulatory proteins and serves as a scaffold for the assembly of a functional preinitiation complex with RNA polymerase II and the general transcription factors. This chain is Mediator of RNA polymerase II transcription subunit 7 (med7), found in Xenopus tropicalis (Western clawed frog).